We begin with the raw amino-acid sequence, 263 residues long: Phosphatidylglycerol--prolipoprotein diacylglyceryl transferase (263 aa).

The next 4 membrane-spanning stretches (helical) occupy residues 7–27 (IFSIGPVSIHWYSLAYVLGIV), 50–70 (LLTATIIGIILGGRLGFVLIY), 85–105 (TWKGGMSFHGGAIGVLCAVII), and 112–132 (IPIFYTLDLISCGVPIGLFLG). R133 provides a ligand contact to a 1,2-diacyl-sn-glycero-3-phospho-(1'-sn-glycerol). 3 helical membrane passes run 169–189 (LYEAFFEGLLFFAIANSLFFL), 197–217 (GTLTGIAVIWYGTVRFVVEFF), and 233–253 (MGQLLSIFMTLLGIIVYLSAL).

Belongs to the Lgt family.

It is found in the cell membrane. The catalysed reaction is L-cysteinyl-[prolipoprotein] + a 1,2-diacyl-sn-glycero-3-phospho-(1'-sn-glycerol) = an S-1,2-diacyl-sn-glyceryl-L-cysteinyl-[prolipoprotein] + sn-glycerol 1-phosphate + H(+). Its pathway is protein modification; lipoprotein biosynthesis (diacylglyceryl transfer). Functionally, catalyzes the transfer of the diacylglyceryl group from phosphatidylglycerol to the sulfhydryl group of the N-terminal cysteine of a prolipoprotein, the first step in the formation of mature lipoproteins. This is Phosphatidylglycerol--prolipoprotein diacylglyceryl transferase from Wolbachia sp. subsp. Brugia malayi (strain TRS).